Consider the following 249-residue polypeptide: 5'-nucleotidase SurE (249 aa).

4 residues coordinate a divalent metal cation: Asp-8, Asp-9, Ser-39, and Asn-91.

This sequence belongs to the SurE nucleotidase family. The cofactor is a divalent metal cation.

It is found in the cytoplasm. It catalyses the reaction a ribonucleoside 5'-phosphate + H2O = a ribonucleoside + phosphate. In terms of biological role, nucleotidase that shows phosphatase activity on nucleoside 5'-monophosphates. This Pseudomonas savastanoi pv. phaseolicola (strain 1448A / Race 6) (Pseudomonas syringae pv. phaseolicola (strain 1448A / Race 6)) protein is 5'-nucleotidase SurE.